A 453-amino-acid chain; its full sequence is Bifunctional protein GlmU (453 aa).

The pyrophosphorylase stretch occupies residues 1 to 226 (MKFSAVILAA…PIEVEGVNDR (226 aa)). UDP-N-acetyl-alpha-D-glucosamine-binding positions include 8–11 (LAAG), K22, Q73, 78–79 (GT), 100–102 (YGD), G137, E151, N166, and N224. Mg(2+) is bound at residue D102. N224 contacts Mg(2+). The linker stretch occupies residues 227 to 247 (AQLARLERAFQAAQAKKLLEQ). The tract at residues 248–453 (GVMLRDPARF…TGWQRPVKKK (206 aa)) is N-acetyltransferase. R330 and K348 together coordinate UDP-N-acetyl-alpha-D-glucosamine. H360 serves as the catalytic Proton acceptor. UDP-N-acetyl-alpha-D-glucosamine-binding residues include Y363 and N374. Acetyl-CoA-binding positions include A377, 383–384 (NY), S402, A420, and R437.

The protein in the N-terminal section; belongs to the N-acetylglucosamine-1-phosphate uridyltransferase family. In the C-terminal section; belongs to the transferase hexapeptide repeat family. In terms of assembly, homotrimer. It depends on Mg(2+) as a cofactor.

It localises to the cytoplasm. The catalysed reaction is alpha-D-glucosamine 1-phosphate + acetyl-CoA = N-acetyl-alpha-D-glucosamine 1-phosphate + CoA + H(+). The enzyme catalyses N-acetyl-alpha-D-glucosamine 1-phosphate + UTP + H(+) = UDP-N-acetyl-alpha-D-glucosamine + diphosphate. The protein operates within nucleotide-sugar biosynthesis; UDP-N-acetyl-alpha-D-glucosamine biosynthesis; N-acetyl-alpha-D-glucosamine 1-phosphate from alpha-D-glucosamine 6-phosphate (route II): step 2/2. It participates in nucleotide-sugar biosynthesis; UDP-N-acetyl-alpha-D-glucosamine biosynthesis; UDP-N-acetyl-alpha-D-glucosamine from N-acetyl-alpha-D-glucosamine 1-phosphate: step 1/1. It functions in the pathway bacterial outer membrane biogenesis; LPS lipid A biosynthesis. Functionally, catalyzes the last two sequential reactions in the de novo biosynthetic pathway for UDP-N-acetylglucosamine (UDP-GlcNAc). The C-terminal domain catalyzes the transfer of acetyl group from acetyl coenzyme A to glucosamine-1-phosphate (GlcN-1-P) to produce N-acetylglucosamine-1-phosphate (GlcNAc-1-P), which is converted into UDP-GlcNAc by the transfer of uridine 5-monophosphate (from uridine 5-triphosphate), a reaction catalyzed by the N-terminal domain. This chain is Bifunctional protein GlmU, found in Vibrio vulnificus (strain YJ016).